The chain runs to 275 residues: Probable histone chaperone asf-1 (275 aa).

3 stretches are compositionally biased toward acidic residues: residues 157-166, 183-207, and 230-247; these read EDPVAEPVED, DGQE…EVDL, and KMED…DDEP. A disordered region spans residues 157–275; that stretch reads EDPVAEPVED…SDKTNNEMVQ (119 aa). The segment covering 265 to 275 has biased composition (basic and acidic residues); it reads LSDKTNNEMVQ.

Belongs to the ASF1 family. As to quaternary structure, interacts with histone H3 and histone H4.

The protein resides in the nucleus. Functionally, histone chaperone that facilitates histone deposition and histone exchange and removal during nucleosome assembly and disassembly. The chain is Probable histone chaperone asf-1 from Caenorhabditis elegans.